A 273-amino-acid polypeptide reads, in one-letter code: ATP synthase subunit delta (273 aa).

It belongs to the ATPase delta chain family. In terms of assembly, F-type ATPases have 2 components, F(1) - the catalytic core - and F(0) - the membrane proton channel. F(1) has five subunits: alpha(3), beta(3), gamma(1), delta(1), epsilon(1). F(0) has three main subunits: a(1), b(2) and c(10-14). The alpha and beta chains form an alternating ring which encloses part of the gamma chain. F(1) is attached to F(0) by a central stalk formed by the gamma and epsilon chains, while a peripheral stalk is formed by the delta and b chains.

It is found in the cell membrane. Functionally, f(1)F(0) ATP synthase produces ATP from ADP in the presence of a proton or sodium gradient. F-type ATPases consist of two structural domains, F(1) containing the extramembraneous catalytic core and F(0) containing the membrane proton channel, linked together by a central stalk and a peripheral stalk. During catalysis, ATP synthesis in the catalytic domain of F(1) is coupled via a rotary mechanism of the central stalk subunits to proton translocation. Its function is as follows. This protein is part of the stalk that links CF(0) to CF(1). It either transmits conformational changes from CF(0) to CF(1) or is implicated in proton conduction. The polypeptide is ATP synthase subunit delta (Streptomyces avermitilis (strain ATCC 31267 / DSM 46492 / JCM 5070 / NBRC 14893 / NCIMB 12804 / NRRL 8165 / MA-4680)).